The primary structure comprises 1558 residues: Hybrid PKS-NRPS synthetase TAS1 (1558 aa).

Residues 27–392 (YPMTKAQESL…RGLETPRAQV (366 aa)) form a condensation (C) domain region. Residues 522 to 919 (TYKELNERSN…TITDVMPEVT (398 aa)) form an adenylation (A) domain region. The tract at residues 995–1028 (TSGSSSSATPSLVSSGSTTCRSPSTSSCSDSRSA) is disordered. Residues 1027–1104 (SASPAITSAV…GQVDLLCGSE (78 aa)) form the Carrier domain. O-(pantetheine 4'-phosphoryl)serine is present on S1063. The disordered stretch occupies residues 1116–1144 (LGRGRTKSPAKIVDSQGRSSPSTIPSGGR). Over residues 1131-1140 (QGRSSPSTIP) the composition is skewed to polar residues. In terms of domain architecture, Ketosynthase family 3 (KS3) spans 1145 to 1558 (KSEIAIVGIS…GVNAHCVLRS (414 aa)). Active-site for beta-ketoacyl synthase activity residues include C1308, H1444, and N1484.

The protein in the N-terminal section; belongs to the NRP synthetase family. Requires pantetheine 4'-phosphate as cofactor.

The enzyme catalyses acetoacetyl-CoA + L-isoleucine + ATP = tenuazonic acid + AMP + diphosphate + CoA + 2 H(+). Hybrid PKS-NRPS synthetase that mediates the biosynthesis of the toxin tenuazonic acid (TeA), an inhibitor of protein biosynthesis on ribosomes by suppressing the release of new protein. TAS1 alone is sufficient for TeA synthesis via the condensation of isoleucine (Ile) with acetoacetyl-CoA by the N-terminal NRPS module and subsequent cyclization conducted by the C-terminal KS domain. This Gloeophyllum trabeum (strain ATCC 11539 / FP-39264 / Madison 617) (Brown rot fungus) protein is Hybrid PKS-NRPS synthetase TAS1.